Here is a 222-residue protein sequence, read N- to C-terminus: GMP/IMP nucleotidase YrfG (222 aa).

Asp9 (nucleophile) is an active-site residue. Positions 9 and 11 each coordinate Mg(2+). Substrate-binding positions include 9–11 (DVD) and Lys149. Residue Asp174 coordinates Mg(2+).

Belongs to the HAD-like hydrolase superfamily. Mg(2+) serves as cofactor. It depends on Mn(2+) as a cofactor. The cofactor is Co(2+). Zn(2+) is required as a cofactor.

It carries out the reaction a ribonucleoside 5'-phosphate + H2O = a ribonucleoside + phosphate. Functionally, catalyzes the dephosphorylation of different purine nucleotides (GMP and IMP). Also hydrolyzes flavin mononucleotide (FMN). The chain is GMP/IMP nucleotidase YrfG (yrfG) from Escherichia coli (strain K12).